Here is a 769-residue protein sequence, read N- to C-terminus: Ligand-dependent nuclear receptor-interacting factor 1 (769 aa).

Glycyl lysine isopeptide (Lys-Gly) (interchain with G-Cter in SUMO2) cross-links involve residues K259 and K279. Polar residues predominate over residues 378–387 (QIDQQNSVSP). Positions 378 to 400 (QIDQQNSVSPDTPVRKDTLQTVS) are disordered. Phosphoserine is present on residues S402, S430, and S436. A Glycyl lysine isopeptide (Lys-Gly) (interchain with G-Cter in SUMO2) cross-link involves residue K446. S502 is subject to Phosphoserine. Positions 528 to 562 (DQEPKIHNEMASTSDKGAQGRNDKKDSQGRSNKAL) are disordered. A PxVxL motif motif is present at residues 580–584 (LRVCL). S599 bears the Phosphoserine mark. K605 is covalently cross-linked (Glycyl lysine isopeptide (Lys-Gly) (interchain with G-Cter in SUMO2)). 2 consecutive short sequence motifs (nuclear localization signal) follow at residues 628–631 (KKRK) and 642–645 (KKRK). K702 is covalently cross-linked (Glycyl lysine isopeptide (Lys-Gly) (interchain with G-Cter in SUMO2)). T732 is subject to Phosphothreonine. Residues 740–769 (IRDEKIRRLKQVLREKEAALEEMRKKMHQK) adopt a coiled-coil conformation.

It belongs to the LRIF1 family. As to quaternary structure, interacts with RARA. Interacts with SMCHD1; leading to recruitment to inactivated chromosome X in females. Interacts (via PxVxL motif) with HP1 (CBX1/HP1-beta, CBX3/HP1-gamma and CBX5/HP1-alpha). As to expression, widely expressed, with the highest expression levels in heart, liver and placenta.

Its subcellular location is the chromosome. The protein localises to the nucleus matrix. Its function is as follows. Together with SMCHD1, involved in chromosome X inactivation in females by promoting the compaction of heterochromatin. Also able to repress the ligand-induced transcriptional activity of retinoic acid receptor alpha (RARA), possibly through direct recruitment of histone deacetylases. Also required for silencing of the DUX4 locus in somatic cells. This is Ligand-dependent nuclear receptor-interacting factor 1 from Homo sapiens (Human).